A 455-amino-acid polypeptide reads, in one-letter code: Protein png1 (455 aa).

Residues 1 to 110 form a disordered region; it reads MTDGRQQHTR…LPVFPSPPRD (110 aa). Residues 38–53 show a composition bias toward low complexity; sequence SLQEQSRSRSRTQSPS. Residues 59 to 73 are compositionally biased toward pro residues; that stretch reads HTPPHPSRAPPPPPT. Low complexity predominate over residues 74–98; the sequence is GAHYPSSQSPSQQHQQHQLPASSSL. Residues Cys-199, Cys-202, Cys-231, and Cys-236 each coordinate Zn(2+). The interval 408–455 is disordered; it reads NLIPREQTSGRPGEQKTPASMQDTPVDWVAAQQMGPGQSGPDRSQDGR.

Belongs to the transglutaminase-like superfamily. PNGase family.

In Aspergillus fumigatus (strain ATCC MYA-4609 / CBS 101355 / FGSC A1100 / Af293) (Neosartorya fumigata), this protein is Protein png1 (png1).